Consider the following 506-residue polypeptide: 2,3-bisphosphoglycerate-independent phosphoglycerate mutase (506 aa).

Residues aspartate 12 and serine 63 each coordinate Mn(2+). Catalysis depends on serine 63, which acts as the Phosphoserine intermediate. Substrate is bound by residues histidine 122, 151 to 152 (RD), arginine 182, arginine 188, 253 to 256 (RADR), and lysine 323. Aspartate 390, histidine 394, aspartate 432, histidine 433, and histidine 451 together coordinate Mn(2+).

It belongs to the BPG-independent phosphoglycerate mutase family. Monomer. Mn(2+) serves as cofactor.

The enzyme catalyses (2R)-2-phosphoglycerate = (2R)-3-phosphoglycerate. Its pathway is carbohydrate degradation; glycolysis; pyruvate from D-glyceraldehyde 3-phosphate: step 3/5. Catalyzes the interconversion of 2-phosphoglycerate and 3-phosphoglycerate. This is 2,3-bisphosphoglycerate-independent phosphoglycerate mutase from Wolbachia pipientis wMel.